The primary structure comprises 254 residues: Type III pantothenate kinase (254 aa).

6–13 is an ATP binding site; the sequence is DVGNTNTT. Substrate contacts are provided by residues Tyr-100 and 107–110; that span reads GADR. The active-site Proton acceptor is Asp-109. Asp-129 lines the K(+) pocket. Thr-132 contacts ATP. Residue Thr-184 participates in substrate binding.

This sequence belongs to the type III pantothenate kinase family. In terms of assembly, homodimer. NH4(+) serves as cofactor. It depends on K(+) as a cofactor.

It localises to the cytoplasm. It carries out the reaction (R)-pantothenate + ATP = (R)-4'-phosphopantothenate + ADP + H(+). The protein operates within cofactor biosynthesis; coenzyme A biosynthesis; CoA from (R)-pantothenate: step 1/5. Its function is as follows. Catalyzes the phosphorylation of pantothenate (Pan), the first step in CoA biosynthesis. This chain is Type III pantothenate kinase, found in Anaeromyxobacter dehalogenans (strain 2CP-C).